Here is a 479-residue protein sequence, read N- to C-terminus: Calcium-dependent mitochondrial ATP-magnesium/phosphate carrier protein 3 (479 aa).

Over 1-208 (MESSKPKNRN…ISKHVKRSRL (208 aa)) the chain is Mitochondrial intermembrane. 4 EF-hand domains span residues 33–68 (EREIRIRSLFDFFDNSNLGFLDYAQIEKGLASLQIP), 69–104 (PEYKYARDLFRVCDANRDGRVDYQEFRRYIDAKELE), 105–135 (LYRIFQAIDVEHNGCILPEELWEALVKAGIE), and 136–171 (IDDEELARFVEHVDKDNNGTITFEEWRDFLLLYPHE). Ca(2+) is bound by residues Asp-82, Asn-84, Asp-86, Arg-88, and Glu-93. Asp-149, Asp-151, Asn-153, Thr-155, and Glu-160 together coordinate Ca(2+). Solcar repeat units follow at residues 203 to 286 (VKRS…LKPM), 294 to 381 (IGTS…LKDL), and 392 to 475 (PGPL…MKKN). Residues 209 to 226 (LLAGGLAGAVSRTATAPL) traverse the membrane as a helical segment. Residues 227–260 (DRLKVVLQVQRAHAGVLPTIKKIWREDKLMGFFR) lie on the Mitochondrial matrix side of the membrane. The chain crosses the membrane as a helical span at residues 261 to 280 (GNGLNVMKVAPESAIKFCAY). Residues 281–303 (EMLKPMIGGEDGDIGTSGRLMAG) are Mitochondrial intermembrane-facing. The helical transmembrane segment at 304–317 (GMAGALAQTAIYPM) threads the bilayer. The Mitochondrial matrix portion of the chain corresponds to 318 to 355 (DLVKTRLQTCVSEGGKAPKLWKLTKDIWVREGPRAFYK). The chain crosses the membrane as a helical span at residues 356–375 (GLFPSLLGIVPYAGIDLAAY). At 376-397 (ETLKDLSRTYILQDTEPGPLIQ) the chain is on the mitochondrial intermembrane side. The helical transmembrane segment at 398–415 (LSCGMTSGALGASCVYPL) threads the bilayer. At 416–449 (QVVRTRMQADSSKTTMKQEFMNTMKGEGLRGFYR) the chain is on the mitochondrial matrix side. Residues 450-469 (GLLPNLLKVVPAASITYIVY) form a helical membrane-spanning segment. Residues 470 to 479 (EAMKKNMALD) lie on the Mitochondrial intermembrane side of the membrane.

Belongs to the mitochondrial carrier (TC 2.A.29) family. As to expression, expressed in flowers, leaves, stems, roots and seedlings, mostly in seedlings.

It localises to the mitochondrion inner membrane. Its activity is regulated as follows. Counter-exchange transport activity is saturable and inhibited by pyridoxal-5'-phosphate, EDTA and EGTA. Activated by calcium Ca(2+) and manganese Mn(2+) ions, and slightly by iron Fe(2+) and zinc Zn(2+) ions. Repressed by copper ions Cu(2+) and slightly by magnesium Mg(2+) ions. Magnesium Mg(2+) ions promotes slightly ATP uptake, ATP-Mg(2+) being exchanged with ATP(4-). Its function is as follows. Calcium-dependent mitochondrial carrier protein that catalyzes the import of ATP co-transported with metal divalent cations across the mitochondrial inner membrane in exchange for phosphate (Pi). Can transport phosphate, AMP, ADP, ATP, adenosine 5'-phosphosulfate, sulfate and thiosulfate, and, to a lesser extent, other nucleotides. Binds calcium ions Ca(2+). Also mediates calcium uptake. In Arabidopsis thaliana (Mouse-ear cress), this protein is Calcium-dependent mitochondrial ATP-magnesium/phosphate carrier protein 3.